A 187-amino-acid chain; its full sequence is Elongation factor P (187 aa).

It belongs to the elongation factor P family.

The protein localises to the cytoplasm. The protein operates within protein biosynthesis; polypeptide chain elongation. Involved in peptide bond synthesis. Stimulates efficient translation and peptide-bond synthesis on native or reconstituted 70S ribosomes in vitro. Probably functions indirectly by altering the affinity of the ribosome for aminoacyl-tRNA, thus increasing their reactivity as acceptors for peptidyl transferase. This chain is Elongation factor P, found in Corynebacterium glutamicum (strain R).